The sequence spans 627 residues: tRNA uridine 5-carboxymethylaminomethyl modification enzyme MnmG (627 aa).

14 to 19 (GAGHAG) contributes to the FAD binding site. 275 to 289 (GPRYCPSIEDKVVKF) lines the NAD(+) pocket.

It belongs to the MnmG family. As to quaternary structure, homodimer. Heterotetramer of two MnmE and two MnmG subunits. FAD serves as cofactor.

The protein resides in the cytoplasm. In terms of biological role, NAD-binding protein involved in the addition of a carboxymethylaminomethyl (cmnm) group at the wobble position (U34) of certain tRNAs, forming tRNA-cmnm(5)s(2)U34. The sequence is that of tRNA uridine 5-carboxymethylaminomethyl modification enzyme MnmG from Lachnoclostridium phytofermentans (strain ATCC 700394 / DSM 18823 / ISDg) (Clostridium phytofermentans).